The sequence spans 419 residues: Tol-Pal system protein TolB (419 aa).

A signal peptide spans 1–19 (MFNRIISLFLLLFTGQVIA).

This sequence belongs to the TolB family. The Tol-Pal system is composed of five core proteins: the inner membrane proteins TolA, TolQ and TolR, the periplasmic protein TolB and the outer membrane protein Pal. They form a network linking the inner and outer membranes and the peptidoglycan layer.

It localises to the periplasm. Functionally, part of the Tol-Pal system, which plays a role in outer membrane invagination during cell division and is important for maintaining outer membrane integrity. This chain is Tol-Pal system protein TolB, found in Legionella pneumophila subsp. pneumophila (strain Philadelphia 1 / ATCC 33152 / DSM 7513).